Consider the following 521-residue polypeptide: Histone acetyltransferase ESA1 (521 aa).

The tract at residues 1–32 (MSVGEDKSGTATPQHNTSIRITDDEERSDEKK) is disordered. Polar residues predominate over residues 9–20 (GTATPQHNTSIR). Residues 39-90 (ITGCKLYVSKDGEYRLAEILQDHMKKGKKVFYVHYQEFNKRLDEWISADRID) form the Tudor-knot domain. Residues 100 to 154 (VKVDKKDDKKEGKSKTSKKSKSKNGKTGSKSVTSTPQPNEDTAPGTPRNDDEMDL) are disordered. The segment covering 101-113 (KVDKKDDKKEGKS) has biased composition (basic and acidic residues). A compositionally biased stretch (basic residues) spans 114 to 123 (KTSKKSKSKN). Over residues 124 to 133 (GKTGSKSVTS) the composition is skewed to low complexity. One can recognise an MYST-type HAT domain in the interval 192–509 (ARVRNLSSVI…LDPSKLSWTP (318 aa)). The C2HC MYST-type; degenerate zinc finger occupies 225–250 (IYICDFTLAYFGSLKQFERFRTKCSM). An ESA1-RPD3 motif motif is present at residues 275-296 (RTWCRNLCLLSKLFLDHKTLYY). N6-acetyllysine; by autocatalysis is present on Lys292. Residues 333–337 (ACILT) and 342–348 (QKMGFGK) contribute to the acetyl-CoA site. The Proton donor/acceptor role is filled by Glu368. Ser372 contacts acetyl-CoA. 2 stretches are compositionally biased toward polar residues: residues 403–418 (NNPQLLTEASSKDSSV) and 426–436 (QSANIQNGNTP). The disordered stretch occupies residues 403–438 (NNPQLLTEASSKDSSVSPPPGGRQSANIQNGNTPSS).

It belongs to the MYST (SAS/MOZ) family. As to quaternary structure, component of the NuA4 histone acetyltransferase complex. Autoacetylation at Lys-292 is required for proper function.

It is found in the nucleus. Its subcellular location is the chromosome. The catalysed reaction is L-lysyl-[histone] + acetyl-CoA = N(6)-acetyl-L-lysyl-[histone] + CoA + H(+). It carries out the reaction L-lysyl-[protein] + acetyl-CoA = N(6)-acetyl-L-lysyl-[protein] + CoA + H(+). It catalyses the reaction 2-hydroxyisobutanoyl-CoA + L-lysyl-[protein] = N(6)-(2-hydroxyisobutanoyl)-L-lysyl-[protein] + CoA + H(+). The enzyme catalyses (2E)-butenoyl-CoA + L-lysyl-[protein] = N(6)-(2E)-butenoyl-L-lysyl-[protein] + CoA + H(+). Catalytic component of the NuA4 histone acetyltransferase (HAT) complex which is involved in epigenetic transcriptional activation of selected genes principally by acetylation of nucleosomal histones H4, H3, H2B, H2A and H2A variant H2A.Z. Acetylates histone H4 to form H4K5ac, H4K8ac, H4K12ac and H4K16ac, histone H3 to form H3K14ac, and histone H2A to form H2AK4ac and H2AK7ac. The NuA4 complex is involved in the DNA damage response and is required for chromosome segregation. The NuA4 complex plays a direct role in repair of DNA double-strand breaks (DSBs) through homologous recombination. Recruitment to promoters depends on H3K4me. Also acetylates non-histone proteins. In addition to protein acetyltransferase, can use different acyl-CoA substrates, such as 2-hydroxyisobutanoyl-CoA (2-hydroxyisobutyryl-CoA) or (2E)-butenoyl-CoA (crotonyl-CoA), and is able to mediate protein 2-hydroxyisobutyrylation and crotonylation, respectively. This Debaryomyces hansenii (strain ATCC 36239 / CBS 767 / BCRC 21394 / JCM 1990 / NBRC 0083 / IGC 2968) (Yeast) protein is Histone acetyltransferase ESA1 (ESA1).